Reading from the N-terminus, the 124-residue chain is Snake venom vascular endothelial growth factor toxin apiscin (124 aa).

The first 24 residues, 1–24 (MAAYLLAVAILFCIQGWPSGTVQG), serve as a signal peptide directing secretion. Position 25 is a pyrrolidone carboxylic acid (Gln25). Intrachain disulfides connect Cys38–Cys80, Cys69–Cys115, and Cys73–Cys117.

This sequence belongs to the PDGF/VEGF growth factor family. Snake venom VEGF subfamily. In terms of assembly, homodimer; disulfide-linked. Interacts with VEGF receptor-1 (FLT1) with a high affinity, whereas it binds to VEGF receptor-2 (KDR) with a low affinity. Does not bind VEGF receptor-3 (FLT4). As to expression, expressed by the venom gland.

Its subcellular location is the secreted. Its function is as follows. Snake venom VEGFs that may contribute to venom dispersion and prey subjugation by inducing vascular permeability and hypotension. This protein induces an increase in capillary permeability after intradermal injection, as well as a drastic hypotensive effect after intravenous injection. The hypotension is mediated by nitric oxide (NO), which is produced by VEGF-activated endothelium NO synthase. Also induces angiogenesis in vitro. Like other crotalid VEGFs, this protein interacts with VEGF receptor-1 (FLT1) with a high affinity, whereas it binds to VEGF receptor-2 (KDR) with a low affinity. In Agkistrodon piscivorus piscivorus (Eastern cottonmouth), this protein is Snake venom vascular endothelial growth factor toxin apiscin.